Consider the following 141-residue polypeptide: Hemoglobin subunit alpha-1 (141 aa).

The 141-residue stretch at 1-141 (VLSPADKNNV…VSTVLTSKYR (141 aa)) folds into the Globin domain. O2 is bound at residue histidine 58. Position 87 (histidine 87) interacts with heme b.

This sequence belongs to the globin family. Heterotetramer of two alpha chains and two beta chains. As to expression, red blood cells.

Its function is as follows. Involved in oxygen transport from the lung to the various peripheral tissues. This is Hemoglobin subunit alpha-1 from Varecia variegata (Black-and-white ruffed lemur).